Reading from the N-terminus, the 191-residue chain is Cell division protein SepF (191 aa).

A compositionally biased stretch (polar residues) spans 157–178 (YLNESPAQPVQTTTSFGRTATP). The tract at residues 157–191 (YLNESPAQPVQTTTSFGRTATPTPAWGTDSRYAAQ) is disordered.

Belongs to the SepF family. Homodimer. Interacts with FtsZ.

The protein resides in the cytoplasm. Its function is as follows. Cell division protein that is part of the divisome complex and is recruited early to the Z-ring. Probably stimulates Z-ring formation, perhaps through the cross-linking of FtsZ protofilaments. Its function overlaps with FtsA. The polypeptide is Cell division protein SepF (Synechococcus elongatus (strain ATCC 33912 / PCC 7942 / FACHB-805) (Anacystis nidulans R2)).